The chain runs to 426 residues: Pyrophosphate--fructose 6-phosphate 1-phosphotransferase 1 (426 aa).

Residue G15 participates in diphosphate binding. D114 contacts Mg(2+). Substrate contacts are provided by residues T140–D142, M186–R188, E247, and Y308–R311. D142 (proton acceptor) is an active-site residue.

The protein belongs to the phosphofructokinase type A (PFKA) family. PPi-dependent PFK group II subfamily. Clade 'Short' sub-subfamily. In terms of assembly, homotetramer. The cofactor is Mg(2+).

The protein localises to the cytoplasm. It catalyses the reaction beta-D-fructose 6-phosphate + diphosphate = beta-D-fructose 1,6-bisphosphate + phosphate + H(+). The protein operates within carbohydrate degradation; glycolysis; D-glyceraldehyde 3-phosphate and glycerone phosphate from D-glucose: step 3/4. Non-allosteric. In terms of biological role, catalyzes the phosphorylation of D-fructose 6-phosphate, the first committing step of glycolysis. Uses inorganic phosphate (PPi) as phosphoryl donor instead of ATP like common ATP-dependent phosphofructokinases (ATP-PFKs), which renders the reaction reversible, and can thus function both in glycolysis and gluconeogenesis. Consistently, PPi-PFK can replace the enzymes of both the forward (ATP-PFK) and reverse (fructose-bisphosphatase (FBPase)) reactions. The chain is Pyrophosphate--fructose 6-phosphate 1-phosphotransferase 1 (Pfk1) from Trichomonas vaginalis (strain ATCC PRA-98 / G3).